Here is a 460-residue protein sequence, read N- to C-terminus: Cysteine--tRNA ligase (460 aa).

Residue Cys-29 coordinates Zn(2+). Residues 31–41 (ATPQSSPHIGH) carry the 'HIGH' region motif. Zn(2+) contacts are provided by Cys-212, His-237, and Glu-241. The short motif at 268–272 (KMSKS) is the 'KMSKS' region element. Lys-271 is a binding site for ATP.

Belongs to the class-I aminoacyl-tRNA synthetase family. As to quaternary structure, monomer. The cofactor is Zn(2+).

The protein resides in the cytoplasm. The enzyme catalyses tRNA(Cys) + L-cysteine + ATP = L-cysteinyl-tRNA(Cys) + AMP + diphosphate. This chain is Cysteine--tRNA ligase, found in Corynebacterium glutamicum (strain ATCC 13032 / DSM 20300 / JCM 1318 / BCRC 11384 / CCUG 27702 / LMG 3730 / NBRC 12168 / NCIMB 10025 / NRRL B-2784 / 534).